The following is an 87-amino-acid chain: Protein moa-2 (87 aa).

Residues 23–87 (GTAMRHEPSR…VWTASREESS (65 aa)) are disordered. Basic and acidic residues-rich tracts occupy residues 26–39 (MRHE…ESAP) and 50–63 (RNEH…EREP).

This chain is Protein moa-2, found in Caenorhabditis elegans.